A 368-amino-acid polypeptide reads, in one-letter code: UDP-N-acetylglucosamine--N-acetylmuramyl-(pentapeptide) pyrophosphoryl-undecaprenol N-acetylglucosamine transferase (368 aa).

UDP-N-acetyl-alpha-D-glucosamine-binding positions include 14–16 (TGG), Asn125, Arg168, Ser196, and Gln297.

Belongs to the glycosyltransferase 28 family. MurG subfamily.

It localises to the cell inner membrane. The catalysed reaction is di-trans,octa-cis-undecaprenyl diphospho-N-acetyl-alpha-D-muramoyl-L-alanyl-D-glutamyl-meso-2,6-diaminopimeloyl-D-alanyl-D-alanine + UDP-N-acetyl-alpha-D-glucosamine = di-trans,octa-cis-undecaprenyl diphospho-[N-acetyl-alpha-D-glucosaminyl-(1-&gt;4)]-N-acetyl-alpha-D-muramoyl-L-alanyl-D-glutamyl-meso-2,6-diaminopimeloyl-D-alanyl-D-alanine + UDP + H(+). It participates in cell wall biogenesis; peptidoglycan biosynthesis. Cell wall formation. Catalyzes the transfer of a GlcNAc subunit on undecaprenyl-pyrophosphoryl-MurNAc-pentapeptide (lipid intermediate I) to form undecaprenyl-pyrophosphoryl-MurNAc-(pentapeptide)GlcNAc (lipid intermediate II). The polypeptide is UDP-N-acetylglucosamine--N-acetylmuramyl-(pentapeptide) pyrophosphoryl-undecaprenol N-acetylglucosamine transferase (Nitrobacter winogradskyi (strain ATCC 25391 / DSM 10237 / CIP 104748 / NCIMB 11846 / Nb-255)).